Consider the following 587-residue polypeptide: ATF/CREB activator 2 (587 aa).

Disordered regions lie at residues 1–62, 123–144, 169–195, and 381–423; these read MFTG…SRSL, LRQQ…EEES, NLSQ…SNIA, and TGGE…IPGT. Basic and acidic residues predominate over residues 16-29; sequence KQKDNNKRGIDDTS. 2 stretches are compositionally biased toward low complexity: residues 39-57 and 123-134; these read SVSD…NNSA and LRQQQQQDQRQQ. S171 and S179 each carry phosphoserine. Basic and acidic residues predominate over residues 385–395; it reads NRGKSALRESH. The span at 396–418 shows a compositional bias: polar residues; sequence SNPSFTPKSQGSHLNLAANTQGN. Residue S399 is modified to Phosphoserine. The bZIP domain maps to 425–488; that stretch reads AWKRARLLER…SKFKKFSKIH (64 aa). The basic motif stretch occupies residues 427 to 447; that stretch reads KRARLLERNRIAASKCRQRKK. The leucine-zipper stretch occupies residues 453-467; sequence LQKEFNEIKDENRIL. Residues 552-587 are disordered; it reads SQRFGSDTDDDDIDLKPVEGGKDPDNQSLPNSEKIK. S557 carries the post-translational modification Phosphoserine. Residue T559 is modified to Phosphothreonine. The span at 565-576 shows a compositional bias: basic and acidic residues; it reads DLKPVEGGKDPD. Polar residues predominate over residues 577 to 587; it reads NQSLPNSEKIK.

Belongs to the bZIP family.

The protein localises to the nucleus. Transcriptional activator of promoters containing ATF/CREB sites. Can independently stimulate transcription through ATF/CREB sites. Important for a variety of biological functions including growth on non-optimal carbon sources. The chain is ATF/CREB activator 2 (CST6) from Saccharomyces cerevisiae (strain ATCC 204508 / S288c) (Baker's yeast).